The primary structure comprises 344 residues: Dihydroorotase (344 aa).

Residues His-14 and His-16 each contribute to the Zn(2+) site. Substrate-binding positions include His-16–Arg-18 and Asn-42. 3 residues coordinate Zn(2+): Lys-100, His-137, and His-175. Lys-100 carries the post-translational modification N6-carboxylysine. His-137 contacts substrate. Leu-220 is a substrate binding site. Residue Asp-248 coordinates Zn(2+). The active site involves Asp-248. Substrate-binding residues include His-252 and Ala-264.

It belongs to the metallo-dependent hydrolases superfamily. DHOase family. Class II DHOase subfamily. As to quaternary structure, homodimer. It depends on Zn(2+) as a cofactor.

The catalysed reaction is (S)-dihydroorotate + H2O = N-carbamoyl-L-aspartate + H(+). It participates in pyrimidine metabolism; UMP biosynthesis via de novo pathway; (S)-dihydroorotate from bicarbonate: step 3/3. Catalyzes the reversible cyclization of carbamoyl aspartate to dihydroorotate. This is Dihydroorotase from Cupriavidus metallidurans (strain ATCC 43123 / DSM 2839 / NBRC 102507 / CH34) (Ralstonia metallidurans).